We begin with the raw amino-acid sequence, 160 residues long: Nucleotide-binding protein VSAL_I1728 (160 aa).

Belongs to the YajQ family.

Its function is as follows. Nucleotide-binding protein. The sequence is that of Nucleotide-binding protein VSAL_I1728 from Aliivibrio salmonicida (strain LFI1238) (Vibrio salmonicida (strain LFI1238)).